We begin with the raw amino-acid sequence, 88 residues long: Small ribosomal subunit protein uS17 (88 aa).

Belongs to the universal ribosomal protein uS17 family. Part of the 30S ribosomal subunit.

Functionally, one of the primary rRNA binding proteins, it binds specifically to the 5'-end of 16S ribosomal RNA. This chain is Small ribosomal subunit protein uS17, found in Oleidesulfovibrio alaskensis (strain ATCC BAA-1058 / DSM 17464 / G20) (Desulfovibrio alaskensis).